We begin with the raw amino-acid sequence, 211 residues long: Outer-membrane lipoprotein carrier protein (211 aa).

Residues 1–24 (MNTIKILIGLLGIFLFSLSGIVSA) form the signal peptide.

This sequence belongs to the LolA family. In terms of assembly, monomer.

It is found in the periplasm. Its function is as follows. Participates in the translocation of lipoproteins from the inner membrane to the outer membrane. Only forms a complex with a lipoprotein if the residue after the N-terminal Cys is not an aspartate (The Asp acts as a targeting signal to indicate that the lipoprotein should stay in the inner membrane). The chain is Outer-membrane lipoprotein carrier protein from Coxiella burnetii (strain CbuK_Q154) (Coxiella burnetii (strain Q154)).